The primary structure comprises 31 residues: MSALIGYILLMTLMFSLAAGLYFGLRSIRLI.

A helical membrane pass occupies residues 3–23 (ALIGYILLMTLMFSLAAGLYF).

Belongs to the PetL family. As to quaternary structure, the 4 large subunits of the cytochrome b6-f complex are cytochrome b6, subunit IV (17 kDa polypeptide, PetD), cytochrome f and the Rieske protein, while the 4 small subunits are PetG, PetL, PetM and PetN. The complex functions as a dimer.

Its subcellular location is the plastid. It is found in the chloroplast thylakoid membrane. Component of the cytochrome b6-f complex, which mediates electron transfer between photosystem II (PSII) and photosystem I (PSI), cyclic electron flow around PSI, and state transitions. PetL is important for photoautotrophic growth as well as for electron transfer efficiency and stability of the cytochrome b6-f complex. The chain is Cytochrome b6-f complex subunit 6 from Emiliania huxleyi (Coccolithophore).